Consider the following 128-residue polypeptide: uncharacterized protein (128 aa).

Residues 1–26 (MNSATSETTTNTGAAETTTSTGAAET) are disordered. The chain crosses the membrane as a helical span at residues 105–127 (IANGLLTNNGISVFISTVLLAIV).

Belongs to the flocculin family.

The protein localises to the membrane. This is an uncharacterized protein from Saccharomyces cerevisiae (strain ATCC 204508 / S288c) (Baker's yeast).